The primary structure comprises 802 residues: Receptor-type tyrosine-protein phosphatase alpha (802 aa).

Positions Met-1–Ala-19 are cleaved as a signal peptide. Topologically, residues Asn-20–Pro-151 are extracellular. Residues Asn-21 and Asn-36 are each glycosylated (N-linked (GlcNAc...) asparagine). Residues Thr-39–Leu-59 are disordered. 5 N-linked (GlcNAc...) asparagine glycosylation sites follow: Asn-68, Asn-80, Asn-86, Asn-104, and Asn-124. Composition is skewed to polar residues over residues Val-79 to Asp-115 and Gly-123 to Ser-141. Residues Val-79 to Arg-146 are disordered. Residues Ile-152 to Met-174 form a helical membrane-spanning segment. The Cytoplasmic segment spans residues Leu-175–Lys-802. Residues Ser-211 and Ser-213 each carry the phosphoserine modification. Tyrosine-protein phosphatase domains are found at residues Phe-241–His-501 and Leu-533–Tyr-791. Substrate is bound by residues Asp-410, Cys-442–Arg-448, and Gln-486. The active-site Phosphocysteine intermediate is the Cys-442. Residue Cys-732 is the Phosphocysteine intermediate of the active site. The residue at position 798 (Tyr-798) is a Phosphotyrosine.

Belongs to the protein-tyrosine phosphatase family. Receptor class 4 subfamily. Part of a complex comprised of PTPRA, BCAR1, BCAR3 (via SH2 domain), and SRC. Within the complex, interacts (when phosphorylated on Tyr-798) with BCAR3 (via SH2 domain). Interacts with GRB2. Post-translationally, integrin binding to extracellular matrix induces phosphorylation at Tyr-798 which induces PTPRA localization and recruitment of BCAR3, BCAR1 and CRK to focal adhesions.

The protein localises to the cell membrane. It is found in the cell junction. Its subcellular location is the focal adhesion. The enzyme catalyses O-phospho-L-tyrosyl-[protein] + H2O = L-tyrosyl-[protein] + phosphate. Its function is as follows. Tyrosine protein phosphatase which is involved in integrin-mediated focal adhesion formation. Following integrin engagement, specifically recruits BCAR3, BCAR1 and CRK to focal adhesions thereby promoting SRC-mediated phosphorylation of BRAC1 and the subsequent activation of PAK and small GTPase RAC1 and CDC42. In Homo sapiens (Human), this protein is Receptor-type tyrosine-protein phosphatase alpha (PTPRA).